The primary structure comprises 438 residues: Acyl-CoA dehydrogenase apdG (438 aa).

The protein belongs to the acyl-CoA dehydrogenase family. FAD is required as a cofactor.

The protein operates within secondary metabolite biosynthesis. Its function is as follows. Acyl-CoA dehydrogenase; part of the gene cluster that mediates the biosynthesis of aspyridones. The polyketide-amino acid backbone preaspyridone A is first assembled by the PKS-NRPS hybrid apdA. The assembly of preaspyridone A is initiated by loading of malonyl-CoA onto apdA, followed by decarboxylation to yield the acetyl starter unit. The growing polyketide chain then elongates into a tetraketide. The adpA PKS module catalyzes three Claisen condensations, as well as beta-keto processing and methylation. Alpha-methylation step during polyketide synthesis is a prerequisite and a key checkpoint for chain transfer between PKS and NRPS modules. The downstream NRPS module contains the condensation (C), adenylation (A), and thiolation (T) domains and catalyzes the incorporation of tyrosine via the formation of the L-tyrosinyl-thioester and the amide linkage between L-tyrosinyl-thioester and the tetraketide. The bimodular assembly line is terminated with a reductase (R) domain that facilitates formation and release of the tetramic acid product. Because apdA lacks a designated enoylreductase (ER) domain, the required activity is provided the enoyl reductase apdC. ApdC appears to operate with different stereoselectivity in different PKS cycle. Combined with apdC, apdA is proposed to synthesize preaspyridone A via about 20 enzymatic steps. A number of oxidative steps performed successively by the cytochrome P450 monooxygenases apdE and apdB are required for the conversion of preaspyridone A to aspyridone A. The cytochrome P450 monooxygenase apdE is responsible for the oxidative dephenylation of preaspyridone A. Finally, the predicted FAD-dependent monooxygenase apdD and the acyl-CoA dehydrogenase apdG may be involved in the transformation of aspyridone A into aspyridone B. This chain is Acyl-CoA dehydrogenase apdG, found in Emericella nidulans (strain FGSC A4 / ATCC 38163 / CBS 112.46 / NRRL 194 / M139) (Aspergillus nidulans).